Reading from the N-terminus, the 177-residue chain is Dynein light chain Tctex-type 5-A (177 aa).

Belongs to the dynein light chain Tctex-type family.

This Xenopus laevis (African clawed frog) protein is Dynein light chain Tctex-type 5-A (Dynlt5-a).